The sequence spans 105 residues: MGCCGCGSCGGCGGRCGGGCGGGCSGGCGGGCGGGCGGGCGSCTTCRCYRVGCCSSCCPCCRGCCGGCCSTPVICCCRRTCGSCGCGYGKGCCQQKCCCQKQCCC.

Positions 4–87 (CGCGSCGGCG…RRTCGSCGCG (84 aa)) are 14 X 2 AA repeats of CG.

Belongs to the KRTAP type 28 family.

Functionally, in the hair cortex, hair keratin intermediate filaments are embedded in an interfilamentous matrix, consisting of hair keratin-associated proteins (KRTAP), which are essential for the formation of a rigid and resistant hair shaft through their extensive disulfide bond cross-linking with abundant cysteine residues of hair keratins. The matrix proteins include the high-sulfur and high-glycine-tyrosine keratins. The protein is Small cysteine and glycine repeat-containing protein 4 of Homo sapiens (Human).